A 930-amino-acid chain; its full sequence is Eisosome protein 1 (930 aa).

Disordered regions lie at residues 1-34 (MSLI…DGKP), 98-143 (TAVS…APKK), 516-544 (DNEI…EEFD), and 637-930 (NNKS…KEVF). 2 stretches are compositionally biased toward low complexity: residues 13-27 (ASST…SSAV) and 98-129 (TAVS…AVKA). Composition is skewed to basic and acidic residues over residues 523-542 (AAKH…HKEE) and 676-691 (NSDE…KSSE). Positions 703-715 (PAKASSPYPAKPS) are enriched in low complexity. Basic and acidic residues predominate over residues 721–731 (LPKDFKPEVKP). Low complexity-rich tracts occupy residues 740 to 755 (PQQG…SAKS) and 781 to 804 (PAAA…KAAA). Polar residues-rich tracts occupy residues 849–866 (NATT…NSGI) and 883–894 (SGHSNHTRTSVY). Residues 898 to 908 (DNSDDEDELPD) show a composition bias toward acidic residues. Residues 919-930 (ADKKGSLFKEVF) show a composition bias toward basic and acidic residues.

The protein belongs to the EIS1 family.

Its subcellular location is the cytoplasmic granule. The protein localises to the cell membrane. Its function is as follows. Required for normal formation of eisosomes, large cytoplasmic protein assemblies that localize to specialized domains on plasma membrane and mark the site of endocytosis. The sequence is that of Eisosome protein 1 (EIS1) from Lachancea thermotolerans (strain ATCC 56472 / CBS 6340 / NRRL Y-8284) (Yeast).